A 912-amino-acid chain; its full sequence is Phosphoenolpyruvate carboxylase (912 aa).

Residues histidine 138 and lysine 575 contribute to the active site.

Belongs to the PEPCase type 1 family. Mg(2+) is required as a cofactor.

It carries out the reaction oxaloacetate + phosphate = phosphoenolpyruvate + hydrogencarbonate. Its function is as follows. Forms oxaloacetate, a four-carbon dicarboxylic acid source for the tricarboxylic acid cycle. This Lactobacillus acidophilus (strain ATCC 700396 / NCK56 / N2 / NCFM) protein is Phosphoenolpyruvate carboxylase.